Reading from the N-terminus, the 324-residue chain is Malate dehydrogenase (324 aa).

NAD(+) is bound by residues Gly21 to Gly26 and Asp45. Substrate is bound by residues Arg94 and Arg100. NAD(+) contacts are provided by residues Asn107 and Val130–Asn132. Residues Asn132 and Arg163 each contribute to the substrate site. His187 acts as the Proton acceptor in catalysis.

It belongs to the LDH/MDH superfamily. MDH type 3 family.

It catalyses the reaction (S)-malate + NAD(+) = oxaloacetate + NADH + H(+). Its function is as follows. Catalyzes the reversible oxidation of malate to oxaloacetate. In Trichormus variabilis (strain ATCC 29413 / PCC 7937) (Anabaena variabilis), this protein is Malate dehydrogenase.